A 603-amino-acid chain; its full sequence is NADH-ubiquinone oxidoreductase chain 5 (603 aa).

Transmembrane regions (helical) follow at residues 4–24 (ISTL…TTLL), 35–55 (ITKT…LLFV), 84–104 (FFSL…MEFS), 121–141 (LLLF…LQLF), 177–197 (IGDM…NSWE), 213–233 (LLGL…HPWL), 241–261 (TPVS…FTLI), 273–293 (VQTS…ICAL), 301–320 (IIAL…IGIN), 325–347 (AFTH…GSII), 366–386 (MPIT…MPFL), 413–433 (LIAV…ALLG), 457–477 (LILG…PHTT), 480–500 (MTMP…GFTV), and 583–603 (LMKL…LIAL).

It belongs to the complex I subunit 5 family. As to quaternary structure, core subunit of respiratory chain NADH dehydrogenase (Complex I) which is composed of 45 different subunits.

It localises to the mitochondrion inner membrane. It carries out the reaction a ubiquinone + NADH + 5 H(+)(in) = a ubiquinol + NAD(+) + 4 H(+)(out). Its function is as follows. Core subunit of the mitochondrial membrane respiratory chain NADH dehydrogenase (Complex I) which catalyzes electron transfer from NADH through the respiratory chain, using ubiquinone as an electron acceptor. Essential for the catalytic activity and assembly of complex I. In Mammuthus primigenius (Siberian woolly mammoth), this protein is NADH-ubiquinone oxidoreductase chain 5 (MT-ND5).